Reading from the N-terminus, the 369-residue chain is ERCC4 domain-containing protein EP364R (369 aa).

In terms of domain architecture, ERCC4 spans 3–101 (FLVADHREHH…QLYFFVEGPA (99 aa)). The tract at residues 339–369 (PLHDVSDDASSDASSPTGHQTLSKEMSLNTA) is disordered. A compositionally biased stretch (polar residues) spans 354–369 (PTGHQTLSKEMSLNTA).

The protein belongs to the asfivirus EP364R family.

Functionally, plays a role in the inhibition of type I interferon signaling pathway. Mechanistically, specifically interacts with 2',3'-cGAMP and cleaves it via its phosphodiesterase activity. In turn, prevents 2',3'-cGAMP interaction with host ER-resident STING1 leading to inhibition of downstream signaling pathway and type I interferon production. The polypeptide is ERCC4 domain-containing protein EP364R (African swine fever virus (isolate Tick/South Africa/Pretoriuskop Pr4/1996) (ASFV)).